Reading from the N-terminus, the 612-residue chain is Indole-3-acetic acid-amido synthetase GH3.5 (612 aa).

The protein belongs to the IAA-amido conjugating enzyme family.

Its function is as follows. Catalyzes the synthesis of indole-3-acetic acid (IAA)-amino acid conjugates, providing a mechanism for the plant to cope with the presence of excess auxin. Strongly reactive with Glu, Gln, Trp, Asp, Ala, Leu, Phe, Gly, Tyr, Met, Ile and Val. Little or no product formation with His, Ser, Thr, Arg, Lys, or Cys. Also active on pyruvic and butyric acid analogs of IAA, PAA and the synthetic auxin naphthaleneacetic acid (NAA). The two chlorinated synthetic auxin herbicides 2,4-D and 3,6-dichloro-o-anisic acid (dicamba) cannot be used as substrates. This Arabidopsis thaliana (Mouse-ear cress) protein is Indole-3-acetic acid-amido synthetase GH3.5 (GH3.5).